Reading from the N-terminus, the 383-residue chain is Mannitol-1-phosphate 5-dehydrogenase (383 aa).

NAD(+) is bound at residue 3–14; it reads AVHFGAGNIGRG.

The protein belongs to the mannitol dehydrogenase family.

The catalysed reaction is D-mannitol 1-phosphate + NAD(+) = beta-D-fructose 6-phosphate + NADH + H(+). This chain is Mannitol-1-phosphate 5-dehydrogenase, found in Lacticaseibacillus casei (strain BL23) (Lactobacillus casei).